The chain runs to 404 residues: Lissencephaly-1 homolog (404 aa).

Residues 7–39 (QKEEINRAIAEYMQNNGYSESFSVFLKESSLSE) enclose the LisH domain. The stretch at 54–81 (TTVLRLQRKVNDLESKLQESQREINHGA) forms a coiled coil. Positions 69 to 89 (KLQESQREINHGAPTRDKRQA) are enriched in basic and acidic residues. Residues 69–90 (KLQESQREINHGAPTRDKRQAA) are disordered. 7 WD repeats span residues 104–145 (GHRL…RTLK), 146–185 (GHTD…DCLK), 189–228 (GHEH…CVYT), 231–270 (GHND…AKLV), 273–327 (DHEH…VLFT), 330–369 (AHEN…CMKA), and 372–404 (AHEH…WECR).

The protein belongs to the WD repeat LIS1/nudF family. As to quaternary structure, component of a dynein-regulating complex composed of at least lis-1 and nud-2. Interacts with nud-2; the interaction is direct. As to expression, expressed in all classes of neurons in the ventral cord. Expressed in the multinucleate spermathecal valves and adult seam cells.

The protein localises to the cytoplasm. It localises to the cytoskeleton. Its subcellular location is the microtubule organizing center. The protein resides in the centrosome. It is found in the chromosome. The protein localises to the centromere. It localises to the kinetochore. Its subcellular location is the nucleus envelope. Its function is as follows. Positively regulates the activity of the minus-end directed microtubule motor protein dynein. May enhance dynein-mediated microtubule sliding by targeting dynein to the microtubule plus end. Required for several dynein- and microtubule-dependent processes such as nuclear migration during cell division. Part of a complex with nud-2, which is recruited to the nuclear envelope by unc-83, where, in turn, it recruits dynein to the nuclear surface and regulates nuclear migration in hypodermal precursor cells. Plays a role in GABAergic synaptic vesicle localization in the ventral nerve cord. Required for neuronal cell differentiation. This chain is Lissencephaly-1 homolog, found in Caenorhabditis elegans.